The chain runs to 505 residues: Actin nucleation-promoting factor WASL (505 aa).

Serine 2 bears the N-acetylserine mark. A WH1 domain is found at 34–141; it reads LGKKCVTMSS…KAVTDLLGRR (108 aa). 2 disordered regions span residues 138 to 163 and 185 to 205; these read LGRR…ATVD and TKEK…DIGT. Residues 186 to 198 show a composition bias toward basic residues; it reads KEKKKGKAKKKRL. A CRIB domain is found at 203 to 216; it reads IGTPSNFQHIGHVG. Residue serine 242 is modified to Phosphoserine; by TNK2. Position 256 is a phosphotyrosine; by FAK1 and TNK2 (tyrosine 256). Disordered regions lie at residues 266–406, 449–468, and 477–505; these read EAVK…AGSK, SVTD…SGIV, and KRSK…EWED. 3 stretches are compositionally biased toward pro residues: residues 276 to 349, 356 to 365, and 372 to 391; these read APPP…PLPA, SGPPPPPPPL, and APPP…PPGL. Arginine 307 is modified (omega-N-methylarginine). WH2 domains are found at residues 405–422 and 433–450; these read SKAA…LKKV and GRDA…LKSV. 2 positions are modified to phosphoserine: serine 484 and serine 485. The span at 486-505 shows a compositional bias: acidic residues; sequence DEDEDEDDDEDFEDDDEWED.

Binds actin and the Arp2/3 complex. Interacts with CDC42. Interacts with FCHSD1. Interacts with FCHSD2. Binds to SH3 domains of GRB2. Interacts with the C-terminal SH3 domain of DNMBP. Interacts with SNX9. Interacts with the WW domains of PRPF40A/FBP11. Interacts with PTK2/FAK1. Interacts with PACSIN1, PACSIN2 and PACSIN3. Interacts with NOSTRIN. Binds to TNK2. Interacts with SNX33. Interacts with NONO (via second RRM domain); the interaction is direct. Component of a multiprotein complex with NONO and SFPQ; associates with the complex via direct interaction with NONO. In terms of processing, phosphorylation at Ser-242, Tyr-256, Ser-484 and Ser-485 enhances actin polymerization activity.

It localises to the cytoplasm. Its subcellular location is the cytoskeleton. The protein resides in the nucleus. Regulates actin polymerization by stimulating the actin-nucleating activity of the Arp2/3 complex. Involved in various processes, such as mitosis and cytokinesis, via its role in the regulation of actin polymerization. Together with CDC42, involved in the extension and maintenance of the formation of thin, actin-rich surface projections called filopodia. In addition to its role in the cytoplasm, also plays a role in the nucleus by regulating gene transcription, probably by promoting nuclear actin polymerization. Binds to HSF1/HSTF1 and forms a complex on heat shock promoter elements (HSE) that negatively regulates HSP90 expression. Plays a role in dendrite spine morphogenesis. This Bos taurus (Bovine) protein is Actin nucleation-promoting factor WASL (WASL).